The following is a 385-amino-acid chain: S-adenosylmethionine synthase (385 aa).

Histidine 16 contacts ATP. Aspartate 18 serves as a coordination point for Mg(2+). Glutamate 44 is a binding site for K(+). L-methionine-binding residues include glutamate 57 and glutamine 100. The tract at residues glutamine 100 to arginine 110 is flexible loop. ATP contacts are provided by residues aspartate 164–lysine 166, lysine 230–phenylalanine 231, aspartate 239, arginine 245–lysine 246, alanine 262, and lysine 266. Aspartate 239 contacts L-methionine. An L-methionine-binding site is contributed by lysine 270.

It belongs to the AdoMet synthase family. Homotetramer; dimer of dimers. Requires Mg(2+) as cofactor. It depends on K(+) as a cofactor.

The protein localises to the cytoplasm. It catalyses the reaction L-methionine + ATP + H2O = S-adenosyl-L-methionine + phosphate + diphosphate. It participates in amino-acid biosynthesis; S-adenosyl-L-methionine biosynthesis; S-adenosyl-L-methionine from L-methionine: step 1/1. In terms of biological role, catalyzes the formation of S-adenosylmethionine (AdoMet) from methionine and ATP. The overall synthetic reaction is composed of two sequential steps, AdoMet formation and the subsequent tripolyphosphate hydrolysis which occurs prior to release of AdoMet from the enzyme. This Helicobacter pylori (strain HPAG1) protein is S-adenosylmethionine synthase.